We begin with the raw amino-acid sequence, 1515 residues long: Homeobox protein cut-like 1 (1515 aa).

A coiled-coil region spans residues 56–361; the sequence is LLKSFQGEID…VKKELNTLKS (306 aa). Positions 393–405 are enriched in polar residues; that stretch reads ENATLRISNSDLS. Disordered stretches follow at residues 393–453, 509–546, 644–666, and 680–702; these read ENAT…SPAG, PYST…ISEG, PKRR…TGSD, and LQVQ…NSDD. Positions 422-432 are enriched in pro residues; it reads GPLPASPPPQL. Ser-427 is subject to Phosphoserine. The segment covering 436–447 has biased composition (polar residues); sequence TGEQVSNTNGTH. Residues 514-544 are compositionally biased toward low complexity; sequence SISSPSPLQQSPDVNGMAPSPSQSESAGSIS. The segment at residues 540-627 is a DNA-binding region (CUT 1); it reads AGSISEGEEI…ILALRSIQGR (88 aa). Ser-761 carries the phosphoserine modification. Disordered regions lie at residues 769 to 871 and 884 to 923; these read PETS…SASA and YSQS…PSVP. Glycyl lysine isopeptide (Lys-Gly) (interchain with G-Cter in SUMO2) cross-links involve residues Lys-783, Lys-809, and Lys-840. Positions 828-852 are enriched in basic and acidic residues; sequence PERRNLTSSEETKADETTASGKERA. Composition is skewed to polar residues over residues 853-868 and 884-906; these read GSSQ…QGPS and YSQS…NSPL. Ser-904 is subject to Phosphoserine. The segment at residues 929-1016 is a DNA-binding region (CUT 2); the sequence is QYEVYMYQEV…QGVLPVQGQQ (88 aa). The segment covering 1032–1044 has biased composition (polar residues); sequence QQGCVSSESTPKT. Residues 1032–1105 are disordered; the sequence is QQGCVSSEST…QPTTPLPLSG (74 aa). Residues 1045–1061 are compositionally biased toward low complexity; it reads SASCSPAPESPMSSSES. Ser-1054 and Ser-1064 each carry phosphoserine. Residues 1112–1199 constitute a DNA-binding region (CUT 3); the sequence is QELVAMSPEL…VEKLMDMKRM (88 aa). A disordered region spans residues 1207 to 1242; it reads RRHSSVSDSQPCEPPSVGIDYSQGASPQPQHQLKKP. Positions 1239–1298 form a DNA-binding region, homeobox; sequence LKKPRVVLAPEEKEALKRAYQQKPYPSPKTIEELATQLNLKTSTVINWFHNYRSRIRREL. Phosphoserine is present on Ser-1265. Residue Lys-1279 forms a Glycyl lysine isopeptide (Lys-Gly) (interchain with G-Cter in SUMO2) linkage. The disordered stretch occupies residues 1307–1488; sequence SQGQAGASDS…AGARDNPVRK (182 aa). Over residues 1313–1328 the composition is skewed to low complexity; that stretch reads ASDSPSARSSRAAPSS. The segment covering 1331 to 1343 has biased composition (acidic residues); that stretch reads DSCDGVEATDAEE. Phosphoserine is present on Ser-1332. Residues 1365–1378 are compositionally biased toward basic and acidic residues; that stretch reads ADREEATQPAEKAK. Residues 1406-1468 are compositionally biased toward low complexity; it reads ADAPAPVPSL…ANAPARRPSS (63 aa). A phosphoserine mark is found at Ser-1468, Ser-1496, and Ser-1506.

The protein belongs to the CUT homeobox family. As to quaternary structure, interacts with BANP. Interacts with SATB1 (via DNA-binding domains); the interaction inhibits the attachment of both proteins to DNA. Post-translationally, phosphorylated by PKA. In terms of processing, as cells progress into S phase, a fraction of CUX1 molecules is proteolytically processed into N-terminally truncated proteins of 110 kDa by CTSL. Cell cycle-dependent processing of CUX1 serves to generate a CDP/Cux p110 with distinct DNA binding and transcriptional properties. As to expression, testis-specific where it is expressed in germ cells.

It localises to the nucleus. Its function is as follows. Transcription factor involved in the control of neuronal differentiation in the brain. Regulates dendrite development and branching, and dendritic spine formation in cortical layers II-III. Also involved in the control of synaptogenesis. In addition, it has probably a broad role in mammalian development as a repressor of developmentally regulated gene expression. May act by preventing binding of positively-activing CCAAT factors to promoters. Component of nf-munr repressor; binds to the matrix attachment regions (MARs) (5' and 3') of the immunoglobulin heavy chain enhancer. Represses T-cell receptor (TCR) beta enhancer function by binding to MARbeta, an ATC-rich DNA sequence located upstream of the TCR beta enhancer. Binds to the TH enhancer; may require the basic helix-loop-helix protein TCF4 as a coactivator. Plays a role in cell cycle progression, in particular at the G1/S transition. As cells progress into S phase, a fraction of CUX1 molecules is proteolytically processed into N-terminally truncated proteins of 110 kDa. While CUX1 only transiently binds to DNA and carries the CCAAT-displacement activity, CDP/Cux p110 makes a stable interaction with DNA and stimulates expression of genes such as POLA1. The sequence is that of Homeobox protein cut-like 1 from Mus musculus (Mouse).